The primary structure comprises 160 residues: E3 ubiquitin ligase complex SCF subunit sconC (160 aa).

The interaction with the F-box domain of F-box proteins stretch occupies residues 101 to 160 (ILAANYLDIKALLDVGCKTVANMIKGKSPEEIRKTFNIQNDFTPEEEDQIRRENEWAEDR).

The protein belongs to the SKP1 family. Component of the SCF (SKP1-CUL1-F-box protein) E3 ubiquitin ligase complexes.

It participates in protein modification; protein ubiquitination. In terms of biological role, essential component of the SCF (SKP1-CUL1-F-box protein) E3 ubiquitin ligase complexes, which mediate the ubiquitination and subsequent proteasomal degradation of target proteins. Controls sulfur metabolite repression, probably by mediating the inactivation or degradation of the metR transcription factor. The polypeptide is E3 ubiquitin ligase complex SCF subunit sconC (sconC) (Talaromyces stipitatus (strain ATCC 10500 / CBS 375.48 / QM 6759 / NRRL 1006) (Penicillium stipitatum)).